A 572-amino-acid polypeptide reads, in one-letter code: Enolase 4 (572 aa).

The tract at residues 181-204 (IEPVPSPVTSPALGKKKGSGKGKK) is disordered. Residues 194–204 (GKKKGSGKGKK) show a composition bias toward basic residues. E288 provides a ligand contact to substrate. K468 serves as the catalytic Proton acceptor. Residue K519 coordinates substrate.

This sequence belongs to the enolase family.

It catalyses the reaction (2R)-2-phosphoglycerate = phosphoenolpyruvate + H2O. It functions in the pathway carbohydrate degradation; glycolysis; pyruvate from D-glyceraldehyde 3-phosphate: step 4/5. This chain is Enolase 4 (eno4), found in Xenopus laevis (African clawed frog).